The sequence spans 314 residues: uncharacterized protein (314 aa).

2 stretches are compositionally biased toward basic residues: residues M1–T16 and A49–A65. The interval M1–L73 is disordered. S-adenosyl-L-methionine-binding residues include G266, I286, and L295.

The protein belongs to the class IV-like SAM-binding methyltransferase superfamily. RNA methyltransferase TrmH family.

This is an uncharacterized protein from Mycobacterium sp. (strain KMS).